The chain runs to 319 residues: 1-aminocyclopropane-1-carboxylate oxidase 1 (319 aa).

One can recognise a Fe2OG dioxygenase domain in the interval 153-253 (PNFGTKVSNY…RMSLASFYNP (101 aa)). Positions 177, 179, and 234 each coordinate Fe cation.

It belongs to the iron/ascorbate-dependent oxidoreductase family. Requires Fe cation as cofactor.

The catalysed reaction is 1-aminocyclopropane-1-carboxylate + L-ascorbate + O2 = ethene + L-dehydroascorbate + hydrogen cyanide + CO2 + 2 H2O. It functions in the pathway alkene biosynthesis; ethylene biosynthesis via S-adenosyl-L-methionine; ethylene from S-adenosyl-L-methionine: step 2/2. The protein is 1-aminocyclopropane-1-carboxylate oxidase 1 (ACO1) of Petunia hybrida (Petunia).